The following is a 1886-amino-acid chain: Highly reducing polyketide synthase (1886 aa).

In terms of domain architecture, Ketosynthase family 3 (KS3) spans 11 to 434; sequence TQDVAIVGLS…GANAHAVLDD (424 aa). Catalysis depends on for beta-ketoacyl synthase activity residues C182, H317, and H357. The malonyl-CoA:ACP transacylase (MAT) domain stretch occupies residues 483-568; that stretch reads FLFSGQDQQS…VNNDLANTKK (86 aa). Residues 616–750 form an N-terminal hotdog fold region; that stretch reads RSLIGAPQPS…GLLSIEYESS (135 aa). The region spanning 616–926 is the PKS/mFAS DH domain; the sequence is RSLIGAPQPS…CTAISEATNP (311 aa). The tract at residues 618-924 is dehydratase (DH) domain; sequence LIGAPQPSYG…LHCTAISEAT (307 aa). H648 acts as the Proton acceptor; for dehydratase activity in catalysis. A C-terminal hotdog fold region spans residues 778–926; sequence HTTQSPKALY…CTAISEATNP (149 aa). D838 (proton donor; for dehydratase activity) is an active-site residue. The interval 1169–1480 is enoylreductase (ER) domain; sequence GMLDEIYFEA…AGKHMGKVAL (312 aa). The segment at 1503 to 1681 is catalytic ketoreductase (KRc) domain; sequence ATYVLVGGFG…VSLDLGLMRD (179 aa). Residues 1802-1879 form the Carrier domain; sequence DVTDLVLEIL…DLVDKIVAKS (78 aa). The residue at position 1839 (S1839) is an O-(pantetheine 4'-phosphoryl)serine.

It participates in mycotoxin biosynthesis. Its function is as follows. Highly reducing polyketide synthase; part of the gene cluster that mediates the biosynthesis of the selective antifungal agent ascochitine, an o-quinone methide that plays a possible protective role against other microbial competitors in nature and is considered to be important for pathogenicity of legume-associated Didymella species. The pathway probably begins with the synthesis of a keto-aldehyde intermediate by the ascochitine non-reducing polyketide synthase pksAC from successive condensations of 4 malonyl-CoA units, presumably with a simple acetyl-CoA starter unit. Release of the keto-aldehyde intermediate is consistent with the presence of the C-terminal reductive release domain. The HR-PKS (orf7) probably makes a diketide starter unit which is passed to the non-reducing polyketide synthase pksAC for further extension, producing ascochital and ascochitine. The aldehyde dehydrogenase (orf1), the 2-oxoglutarate-dependent dioxygenase (orf3) and the dehydrogenase (orf9) are probably involved in subsequent oxidations of methyl groups to the carboxylic acid of the heterocyclic ring. The ascochitine gene cluster also includes a gene encoding a short peptide with a cupin domain (orf2) that is often found in secondary metabolite gene clusters and which function has still to be determined. This is Highly reducing polyketide synthase from Didymella fabae (Leaf and pod spot disease fungus).